Here is a 528-residue protein sequence, read N- to C-terminus: Lysine--tRNA ligase (528 aa).

A 'HIGH' region motif is present at residues 44-52 (PSGLPHIGT). The 'KMSKS' region signature appears at 290-294 (KISKS). Lys-293 serves as a coordination point for ATP.

The protein belongs to the class-I aminoacyl-tRNA synthetase family.

It localises to the cytoplasm. It carries out the reaction tRNA(Lys) + L-lysine + ATP = L-lysyl-tRNA(Lys) + AMP + diphosphate. This chain is Lysine--tRNA ligase (lysS), found in Rickettsia prowazekii (strain Madrid E).